We begin with the raw amino-acid sequence, 32 residues long: Photosystem II reaction center protein T (32 aa).

A helical transmembrane segment spans residues Ala-3 to Phe-23.

It belongs to the PsbT family. In terms of assembly, PSII is composed of 1 copy each of membrane proteins PsbA, PsbB, PsbC, PsbD, PsbE, PsbF, PsbH, PsbI, PsbJ, PsbK, PsbL, PsbM, PsbT, PsbY, PsbZ, Psb30/Ycf12, at least 3 peripheral proteins of the oxygen-evolving complex and a large number of cofactors. It forms dimeric complexes.

Its subcellular location is the plastid. It is found in the chloroplast thylakoid membrane. Functionally, found at the monomer-monomer interface of the photosystem II (PS II) dimer, plays a role in assembly and dimerization of PSII. PSII is a light-driven water plastoquinone oxidoreductase, using light energy to abstract electrons from H(2)O, generating a proton gradient subsequently used for ATP formation. This Psilotum nudum (Whisk fern) protein is Photosystem II reaction center protein T.